Consider the following 143-residue polypeptide: Endoribonuclease YbeY (143 aa).

Zn(2+) is bound by residues His109, His113, and His119.

It belongs to the endoribonuclease YbeY family. The cofactor is Zn(2+).

It is found in the cytoplasm. Single strand-specific metallo-endoribonuclease involved in late-stage 70S ribosome quality control and in maturation of the 3' terminus of the 16S rRNA. The protein is Endoribonuclease YbeY of Carboxydothermus hydrogenoformans (strain ATCC BAA-161 / DSM 6008 / Z-2901).